Consider the following 183-residue polypeptide: Transmembrane protein 154 (183 aa).

The first 22 residues, 1–22, serve as a signal peptide directing secretion; the sequence is MQAPRAALVFALVIALVPVGRG. The Extracellular segment spans residues 23–75; sequence NYEELENSGDTTVESERPNKVTIPSTFAAVTIKETLNANINSTNFAPDENQLE. A helical transmembrane segment spans residues 76–96; the sequence is FILMVLIPLILLVLLLLSVVF. Over 97-183 the chain is Cytoplasmic; it reads LATYYKRKRT…SNHNPSDSES (87 aa). Residues 163–183 are disordered; it reads ECLPTLKEEKESNHNPSDSES. Phosphoserine is present on S179.

The protein localises to the membrane. This chain is Transmembrane protein 154 (TMEM154), found in Homo sapiens (Human).